The primary structure comprises 90 residues: Chaplin-G (90 aa).

The signal sequence occupies residues methionine 1–alanine 27. Residues serine 38 to asparagine 78 enclose the Chaplin domain. Cysteine 58 and cysteine 76 are oxidised to a cystine.

It belongs to the chaplin family. Short chaplin subfamily.

The protein localises to the cell surface. It localises to the secreted. The protein resides in the cell wall. One of 8 partially redundant surface-active proteins required for efficient formation of aerial mycelium; the short chaplins assemble into a hydrophobic, amyloidal fibrillar surface layer that envelopes and protects aerial hyphae and spores, presumably anchored to the long chaplins. Chaplins have an overlapping function with the surface-active SapB peptide; chaplins are essential on minimal medium while on rich medium both chaplins and SapB are required for efficient aerial hyphae formation. Chaplins are also involved in cell attachment to a hydrophobic surface. Forms amyloid fibrils in vitro probably composed of stacked beta-sheets, at low extracellular concentrations individually restores the ability to form aerial hyphae to a chaplin-deficient strain. A small chaplin extract (ChpD, ChpE, ChpF, ChpG and ChpH) self-assembles into 2 different amyloids; small fibrils at the air-water interface form an amphipathic membrane that resembles spore-surface structures involved in aerial hyphae formation, and hydrophilic fibrils in solution that resemble the fibers that attach cells to a hydrophobic surface. At the air-water interface the hydrophilic surface is in contact with water (probably equivalent to the peptidoglycan layer), while the hydrophobic face is exposed to the air, making the surface of the aerial hyphae hydrophobic. A small chaplin extract applied to a chaplin-deficient strain restores aerial hyphae formation. The small chaplin extract forms an amyloid-like structure similar to that seen on the surface of cells without rodlets (rdlA-rdlB deletions), and is highly surface active, reducing surface tension from 72 to 26 mJ/m(2), which probably allows escape of hyphae from an aqueous environment into air. ChpF and ChpG are sufficient to restore the rodlet layer and hydrophobicity to a strain deleted for the other 6 chaplin genes. This is Chaplin-G from Streptomyces coelicolor (strain ATCC BAA-471 / A3(2) / M145).